The following is a 122-amino-acid chain: MIQPQTHLNVADNSGARELMCIRIIGASNRRYAHIGDVIVAVIKDAVPNMPLERSEVVRAVIVRTCKELKRDNGMIIRYDDNAAVVIDQEGNPKGTRVFGAIARELRQFNFTKIVSLAPEVL.

It belongs to the universal ribosomal protein uL14 family. In terms of assembly, part of the 50S ribosomal subunit.

It localises to the plastid. It is found in the chloroplast. Binds to 23S rRNA. The polypeptide is Large ribosomal subunit protein uL14c (Lactuca sativa (Garden lettuce)).